We begin with the raw amino-acid sequence, 52 residues long: Unknown protein from spot 415 of 2D-PAGE of etiolated coleoptile (52 aa).

In Zea mays (Maize), this protein is Unknown protein from spot 415 of 2D-PAGE of etiolated coleoptile.